The chain runs to 484 residues: UDP-N-acetylmuramate--L-alanine ligase (484 aa).

125 to 131 (GTHGKTT) contributes to the ATP binding site.

It belongs to the MurCDEF family.

It localises to the cytoplasm. The enzyme catalyses UDP-N-acetyl-alpha-D-muramate + L-alanine + ATP = UDP-N-acetyl-alpha-D-muramoyl-L-alanine + ADP + phosphate + H(+). The protein operates within cell wall biogenesis; peptidoglycan biosynthesis. Functionally, cell wall formation. The protein is UDP-N-acetylmuramate--L-alanine ligase of Buchnera aphidicola subsp. Acyrthosiphon pisum (strain 5A).